A 352-amino-acid polypeptide reads, in one-letter code: Homoserine O-acetyltransferase (352 aa).

The region spanning 37 to 330 (NAVLVCHALT…APHGHDTFLI (294 aa)) is the AB hydrolase-1 domain. Serine 133 serves as the catalytic Nucleophile. Arginine 206 provides a ligand contact to substrate. Active-site residues include aspartate 296 and histidine 325. Aspartate 326 is a substrate binding site.

This sequence belongs to the AB hydrolase superfamily. MetX family. Homodimer.

Its subcellular location is the cytoplasm. The enzyme catalyses L-homoserine + acetyl-CoA = O-acetyl-L-homoserine + CoA. It participates in amino-acid biosynthesis; L-methionine biosynthesis via de novo pathway; O-acetyl-L-homoserine from L-homoserine: step 1/1. Its function is as follows. Transfers an acetyl group from acetyl-CoA to L-homoserine, forming acetyl-L-homoserine. This Salinibacter ruber (strain DSM 13855 / M31) protein is Homoserine O-acetyltransferase.